We begin with the raw amino-acid sequence, 210 residues long: Thymidylate kinase (210 aa).

10 to 17 (GPEGAGKS) is a binding site for ATP.

Belongs to the thymidylate kinase family.

The enzyme catalyses dTMP + ATP = dTDP + ADP. In terms of biological role, phosphorylation of dTMP to form dTDP in both de novo and salvage pathways of dTTP synthesis. This chain is Thymidylate kinase, found in Pseudomonas syringae pv. syringae (strain B728a).